The following is a 162-amino-acid chain: NADH-quinone oxidoreductase subunit I (162 aa).

4Fe-4S ferredoxin-type domains lie at 52–82 (LRRY…IEAG) and 93–122 (TRYD…EGPN). Residues C62, C65, C68, C72, C102, C105, C108, and C112 each coordinate [4Fe-4S] cluster.

This sequence belongs to the complex I 23 kDa subunit family. In terms of assembly, NDH-1 is composed of 14 different subunits. Subunits NuoA, H, J, K, L, M, N constitute the membrane sector of the complex. [4Fe-4S] cluster is required as a cofactor.

The protein localises to the cell inner membrane. The enzyme catalyses a quinone + NADH + 5 H(+)(in) = a quinol + NAD(+) + 4 H(+)(out). In terms of biological role, NDH-1 shuttles electrons from NADH, via FMN and iron-sulfur (Fe-S) centers, to quinones in the respiratory chain. The immediate electron acceptor for the enzyme in this species is believed to be ubiquinone. Couples the redox reaction to proton translocation (for every two electrons transferred, four hydrogen ions are translocated across the cytoplasmic membrane), and thus conserves the redox energy in a proton gradient. This is NADH-quinone oxidoreductase subunit I from Methylobacterium nodulans (strain LMG 21967 / CNCM I-2342 / ORS 2060).